The chain runs to 600 residues: Chaperone protein DnaK (600 aa).

A Phosphothreonine; by autocatalysis modification is found at Thr175. Over residues 569–578 (SFAQATAQQA) the composition is skewed to low complexity. A disordered region spans residues 569 to 600 (SFAQATAQQANTSESDPKADDSNTIDAEIKQD). Positions 583-600 (SDPKADDSNTIDAEIKQD) are enriched in basic and acidic residues.

It belongs to the heat shock protein 70 family.

In terms of biological role, acts as a chaperone. The polypeptide is Chaperone protein DnaK (Mesomycoplasma hyopneumoniae (strain J / ATCC 25934 / NCTC 10110) (Mycoplasma hyopneumoniae)).